Reading from the N-terminus, the 334-residue chain is Adenine deaminase (334 aa).

The Zn(2+) site is built by His14, His16, and His194. Glu197 functions as the Proton donor in the catalytic mechanism. Asp275 provides a ligand contact to Zn(2+). Residue Asp276 participates in substrate binding.

It belongs to the metallo-dependent hydrolases superfamily. Adenosine and AMP deaminases family. Adenine deaminase type 2 subfamily. It depends on Zn(2+) as a cofactor.

The enzyme catalyses adenine + H2O + H(+) = hypoxanthine + NH4(+). In terms of biological role, catalyzes the hydrolytic deamination of adenine to hypoxanthine. Plays an important role in the purine salvage pathway and in nitrogen catabolism. The protein is Adenine deaminase of Hahella chejuensis (strain KCTC 2396).